We begin with the raw amino-acid sequence, 380 residues long: Beta sliding clamp (380 aa).

The protein belongs to the beta sliding clamp family. Forms a ring-shaped head-to-tail homodimer around DNA which binds and tethers DNA polymerases and other proteins to the DNA. The DNA replisome complex has a single clamp-loading complex (3 tau and 1 each of delta, delta', psi and chi subunits) which binds 3 Pol III cores (1 core on the leading strand and 2 on the lagging strand) each with a beta sliding clamp dimer. Additional proteins in the replisome are other copies of gamma, psi and chi, Ssb, DNA helicase and RNA primase.

Its subcellular location is the cytoplasm. Its function is as follows. Confers DNA tethering and processivity to DNA polymerases and other proteins. Acts as a clamp, forming a ring around DNA (a reaction catalyzed by the clamp-loading complex) which diffuses in an ATP-independent manner freely and bidirectionally along dsDNA. Initially characterized for its ability to contact the catalytic subunit of DNA polymerase III (Pol III), a complex, multichain enzyme responsible for most of the replicative synthesis in bacteria; Pol III exhibits 3'-5' exonuclease proofreading activity. The beta chain is required for initiation of replication as well as for processivity of DNA replication. The protein is Beta sliding clamp (dnaN) of Halalkalibacterium halodurans (strain ATCC BAA-125 / DSM 18197 / FERM 7344 / JCM 9153 / C-125) (Bacillus halodurans).